We begin with the raw amino-acid sequence, 397 residues long: F-box protein At4g11590 (397 aa).

The 47-residue stretch at 24–70 (EKNFNDVPLDVAIEIFMRLPVKSVARFLLLSKFWAEIIRSRHFITSF) folds into the F-box domain.

As to quaternary structure, part of a SCF (ASK-cullin-F-box) protein ligase complex. Interacts with ASK16.

It is found in the nucleus. The protein operates within protein modification; protein ubiquitination. Its function is as follows. Component of SCF(ASK-cullin-F-box) E3 ubiquitin ligase complexes, which may mediate the ubiquitination and subsequent proteasomal degradation of target proteins. The sequence is that of F-box protein At4g11590 from Arabidopsis thaliana (Mouse-ear cress).